Consider the following 83-residue polypeptide: Kappa-theraphotoxin-Cg2b (83 aa).

Positions 1-21 (MKGSAFAIILGLVVLCACSFA) are cleaved as a signal peptide. The propeptide occupies 22-53 (EDEQDQFASPNELLRSMFLESRHELIPEVEGR). 3 cysteine pairs are disulfide-bonded: cysteine 55–cysteine 69, cysteine 62–cysteine 74, and cysteine 68–cysteine 78.

The protein belongs to the neurotoxin 30 (phrixotoxin) family. As to expression, expressed by the venom gland.

Its subcellular location is the secreted. Probable ion channel inhibitor. The sequence is that of Kappa-theraphotoxin-Cg2b from Chilobrachys guangxiensis (Chinese earth tiger tarantula).